Here is an 861-residue protein sequence, read N- to C-terminus: Glucans biosynthesis glucosyltransferase H (861 aa).

Disordered stretches follow at residues 65-89 (RLSA…SVGR) and 101-129 (AGEP…SMVP). 2 stretches are compositionally biased toward basic and acidic residues: residues 67–76 (SAREPAKGET) and 105–114 (LLKRRPDGTV). 6 helical membrane passes run 181-201 (FLLG…TKVL), 208-228 (LLEI…SAGF), 532-552 (VFLT…FLLL), 589-609 (LFSA…LLLV), 616-636 (GGLP…ALLA), and 698-718 (FVLW…LSVM).

It belongs to the glycosyltransferase 2 family. OpgH subfamily.

It is found in the cell inner membrane. It functions in the pathway glycan metabolism; osmoregulated periplasmic glucan (OPG) biosynthesis. Involved in the biosynthesis of osmoregulated periplasmic glucans (OPGs). This Cupriavidus pinatubonensis (strain JMP 134 / LMG 1197) (Cupriavidus necator (strain JMP 134)) protein is Glucans biosynthesis glucosyltransferase H.